We begin with the raw amino-acid sequence, 305 residues long: Ferrochelatase (305 aa).

The Fe cation site is built by histidine 182 and glutamate 262.

The protein belongs to the ferrochelatase family.

The protein localises to the cytoplasm. The enzyme catalyses heme b + 2 H(+) = protoporphyrin IX + Fe(2+). It participates in porphyrin-containing compound metabolism; protoheme biosynthesis; protoheme from protoporphyrin-IX: step 1/1. In terms of biological role, catalyzes the ferrous insertion into protoporphyrin IX. The protein is Ferrochelatase of Herpetosiphon aurantiacus (strain ATCC 23779 / DSM 785 / 114-95).